The sequence spans 266 residues: Putative pyruvate, phosphate dikinase regulatory protein (266 aa).

149-156 (GVSRTSKT) serves as a coordination point for ADP.

The protein belongs to the pyruvate, phosphate/water dikinase regulatory protein family. PDRP subfamily.

It catalyses the reaction N(tele)-phospho-L-histidyl/L-threonyl-[pyruvate, phosphate dikinase] + ADP = N(tele)-phospho-L-histidyl/O-phospho-L-threonyl-[pyruvate, phosphate dikinase] + AMP + H(+). It carries out the reaction N(tele)-phospho-L-histidyl/O-phospho-L-threonyl-[pyruvate, phosphate dikinase] + phosphate + H(+) = N(tele)-phospho-L-histidyl/L-threonyl-[pyruvate, phosphate dikinase] + diphosphate. In terms of biological role, bifunctional serine/threonine kinase and phosphorylase involved in the regulation of the pyruvate, phosphate dikinase (PPDK) by catalyzing its phosphorylation/dephosphorylation. This Geobacillus sp. (strain WCH70) protein is Putative pyruvate, phosphate dikinase regulatory protein.